We begin with the raw amino-acid sequence, 73 residues long: UPF0435 protein lmo1707 (73 aa).

The protein belongs to the UPF0435 family.

This is UPF0435 protein lmo1707 from Listeria monocytogenes serovar 1/2a (strain ATCC BAA-679 / EGD-e).